The chain runs to 283 residues: Release factor glutamine methyltransferase (283 aa).

S-adenosyl-L-methionine is bound by residues aspartate 143 and asparagine 189. 189 to 192 contributes to the substrate binding site; that stretch reads NPPY.

This sequence belongs to the protein N5-glutamine methyltransferase family. PrmC subfamily.

The enzyme catalyses L-glutaminyl-[peptide chain release factor] + S-adenosyl-L-methionine = N(5)-methyl-L-glutaminyl-[peptide chain release factor] + S-adenosyl-L-homocysteine + H(+). Functionally, methylates the class 1 translation termination release factors RF1/PrfA and RF2/PrfB on the glutamine residue of the universally conserved GGQ motif. The chain is Release factor glutamine methyltransferase from Clostridium botulinum (strain Hall / ATCC 3502 / NCTC 13319 / Type A).